The primary structure comprises 178 residues: Heavy metal-associated isoprenylated plant protein 30 (178 aa).

The HMA domain occupies 45–108 (LQTIDLKVRM…AVRRAGKRAE (64 aa)). A metal cation is bound by residues Cys-56 and Cys-59. Cys-175 bears the Cysteine methyl ester mark. Cys-175 carries the S-farnesyl cysteine lipid modification. Residues 176–178 (SLM) constitute a propeptide, removed in mature form.

It belongs to the HIPP family. Interacts with ZHD3/HB21, ZHD11/HB29 and ZHD8/HB30.

In terms of biological role, heavy-metal-binding protein. The sequence is that of Heavy metal-associated isoprenylated plant protein 30 from Arabidopsis thaliana (Mouse-ear cress).